The following is a 359-amino-acid chain: Histidinol-phosphate aminotransferase (359 aa).

Residue Lys-217 is modified to N6-(pyridoxal phosphate)lysine.

The protein belongs to the class-II pyridoxal-phosphate-dependent aminotransferase family. Histidinol-phosphate aminotransferase subfamily. In terms of assembly, homodimer. Pyridoxal 5'-phosphate is required as a cofactor.

It carries out the reaction L-histidinol phosphate + 2-oxoglutarate = 3-(imidazol-4-yl)-2-oxopropyl phosphate + L-glutamate. Its pathway is amino-acid biosynthesis; L-histidine biosynthesis; L-histidine from 5-phospho-alpha-D-ribose 1-diphosphate: step 7/9. The chain is Histidinol-phosphate aminotransferase from Roseobacter denitrificans (strain ATCC 33942 / OCh 114) (Erythrobacter sp. (strain OCh 114)).